We begin with the raw amino-acid sequence, 497 residues long: L-carnitine dehydrogenase/betainyl-CoA thioesterase (497 aa).

Residues 1–335 are L-carnitine dehydrogenase; that stretch reads MSFITKAACV…AKLWANARKP (335 aa). NAD(+) is bound at residue 11–16; that stretch reads GGGVIG. Positions 330-335 are important for dehydrogenase activity; the sequence is ANARKP. The segment at 336-497 is betainyl-CoA thioesterase; sequence EADLGDVKPL…AGRFVGQKRA (162 aa).

This sequence in the N-terminal section; belongs to the 3-hydroxyacyl-CoA dehydrogenase family. L-carnitine dehydrogenase subfamily. The protein in the C-terminal section; belongs to the betainyl-CoA thioesterase family. In terms of assembly, homodimer.

It is found in the cytoplasm. It catalyses the reaction carnitine + NAD(+) = 3-dehydrocarnitine + NADH + H(+). The enzyme catalyses N,N,N-trimethylglycyl-CoA + H2O = glycine betaine + CoA + H(+). It functions in the pathway amine and polyamine metabolism; carnitine metabolism. In terms of biological role, catalyzes the NAD(+)-dependent oxidation of L-carnitine to 3-dehydrocarnitine. Probably also catalyzes the cleavage of betainyl-CoA (N,N,N-trimethylglycyl-CoA) into glycine betaine and coenzyme A. Despite a high similarity to 3-hydroxyacyl-CoA dehydrogenases, cannot dehydrogenate 3-hydroxybutylate and 3-hydroxybutyl-CoA. Is probably involved in a L-carnitine degradation pathway that allows Rhizobium sp. YS-240 to grow on L-carnitine as the sole source of carbon and nitrogen. The polypeptide is L-carnitine dehydrogenase/betainyl-CoA thioesterase (Rhizobium sp).